We begin with the raw amino-acid sequence, 497 residues long: Glutamyl-tRNA(Gln) amidotransferase subunit A (497 aa).

Residues lysine 75 and serine 150 each act as charge relay system in the active site. Serine 174 functions as the Acyl-ester intermediate in the catalytic mechanism.

Belongs to the amidase family. GatA subfamily. As to quaternary structure, heterotrimer of A, B and C subunits.

The catalysed reaction is L-glutamyl-tRNA(Gln) + L-glutamine + ATP + H2O = L-glutaminyl-tRNA(Gln) + L-glutamate + ADP + phosphate + H(+). Allows the formation of correctly charged Gln-tRNA(Gln) through the transamidation of misacylated Glu-tRNA(Gln) in organisms which lack glutaminyl-tRNA synthetase. The reaction takes place in the presence of glutamine and ATP through an activated gamma-phospho-Glu-tRNA(Gln). The protein is Glutamyl-tRNA(Gln) amidotransferase subunit A of Paraburkholderia phymatum (strain DSM 17167 / CIP 108236 / LMG 21445 / STM815) (Burkholderia phymatum).